Consider the following 299-residue polypeptide: Homoserine O-acetyltransferase (299 aa).

The Acyl-thioester intermediate role is filled by C142. Residues K163 and S192 each contribute to the substrate site. The Proton acceptor role is filled by H235. E237 is a catalytic residue. R249 serves as a coordination point for substrate.

Belongs to the MetA family.

It is found in the cytoplasm. It carries out the reaction L-homoserine + acetyl-CoA = O-acetyl-L-homoserine + CoA. The protein operates within amino-acid biosynthesis; L-methionine biosynthesis via de novo pathway; O-acetyl-L-homoserine from L-homoserine: step 1/1. Transfers an acetyl group from acetyl-CoA to L-homoserine, forming acetyl-L-homoserine. The polypeptide is Homoserine O-acetyltransferase (Synechococcus elongatus (strain ATCC 33912 / PCC 7942 / FACHB-805) (Anacystis nidulans R2)).